The sequence spans 308 residues: D-alanine--D-alanine ligase (308 aa).

Positions 104–301 (KQIWQGSDLP…FDELCVAILE (198 aa)) constitute an ATP-grasp domain. 130–185 (IAELGLPVIIKPVHEGSSVGMSKVEKAEDFAAAIEKATQHDAVVMAEKWITGREFT) is a binding site for ATP. Mg(2+) is bound by residues Asp255, Glu268, and Asn270.

Belongs to the D-alanine--D-alanine ligase family. Requires Mg(2+) as cofactor. Mn(2+) is required as a cofactor.

It is found in the cytoplasm. The catalysed reaction is 2 D-alanine + ATP = D-alanyl-D-alanine + ADP + phosphate + H(+). It participates in cell wall biogenesis; peptidoglycan biosynthesis. Cell wall formation. The sequence is that of D-alanine--D-alanine ligase from Acinetobacter baumannii (strain SDF).